We begin with the raw amino-acid sequence, 104 residues long: Putative Fis-like DNA-binding protein (104 aa).

Positions Gln80–Lys99 form a DNA-binding region, H-T-H motif.

This sequence belongs to the transcriptional regulatory Fis family.

This Pseudomonas aeruginosa (strain ATCC 15692 / DSM 22644 / CIP 104116 / JCM 14847 / LMG 12228 / 1C / PRS 101 / PAO1) protein is Putative Fis-like DNA-binding protein.